A 306-amino-acid chain; its full sequence is Oxygen-dependent coproporphyrinogen-III oxidase (306 aa).

Serine 94 provides a ligand contact to substrate. A divalent metal cation-binding residues include histidine 98 and histidine 108. The active-site Proton donor is the histidine 108. 110–112 contacts substrate; that stretch reads NVR. A divalent metal cation-binding residues include histidine 147 and histidine 177. Residues 242–277 are important for dimerization; it reads YVEFNLVYDRGTLFGLQTGGRTESILMSMPPLVRWQ. Position 260 to 262 (260 to 262) interacts with substrate; sequence GGR.

Belongs to the aerobic coproporphyrinogen-III oxidase family. Homodimer. A divalent metal cation serves as cofactor.

It localises to the cytoplasm. It carries out the reaction coproporphyrinogen III + O2 + 2 H(+) = protoporphyrinogen IX + 2 CO2 + 2 H2O. It participates in porphyrin-containing compound metabolism; protoporphyrin-IX biosynthesis; protoporphyrinogen-IX from coproporphyrinogen-III (O2 route): step 1/1. In terms of biological role, involved in the heme biosynthesis. Catalyzes the aerobic oxidative decarboxylation of propionate groups of rings A and B of coproporphyrinogen-III to yield the vinyl groups in protoporphyrinogen-IX. The polypeptide is Oxygen-dependent coproporphyrinogen-III oxidase (Shewanella sediminis (strain HAW-EB3)).